A 331-amino-acid chain; its full sequence is Protoheme IX farnesyltransferase (331 aa).

8 helical membrane passes run 63–83 (LACTLGGGALAAAAAGALNCL), 109–129 (SVFIGAVACTLVSSALLVSGV), 132–152 (LAAGLTLLGLCSYVLLYTAFL), 160–180 (IVFGGVAGAIPPLVGASAAAG), 188–208 (WLFSLVMVWTPAHFWALAILL), 215–235 (VGIPMLPTVSGPFVTAKAISV), 241–261 (VFLSFLGCFVLPEGGLLYGIL), and 294–314 (ILYMFGVCFLLVISRLQVSIV).

This sequence belongs to the UbiA prenyltransferase family. Protoheme IX farnesyltransferase subfamily.

The protein localises to the cell inner membrane. It catalyses the reaction heme b + (2E,6E)-farnesyl diphosphate + H2O = Fe(II)-heme o + diphosphate. The protein operates within porphyrin-containing compound metabolism; heme O biosynthesis; heme O from protoheme: step 1/1. Its function is as follows. Converts heme B (protoheme IX) to heme O by substitution of the vinyl group on carbon 2 of heme B porphyrin ring with a hydroxyethyl farnesyl side group. This chain is Protoheme IX farnesyltransferase, found in Prochlorococcus marinus (strain NATL1A).